Consider the following 168-residue polypeptide: Cyclic pyranopterin monophosphate synthase (168 aa).

Substrate-binding positions include L83 to H85 and M121 to E122. The active site involves D136.

Belongs to the MoaC family. In terms of assembly, homohexamer; trimer of dimers.

It catalyses the reaction (8S)-3',8-cyclo-7,8-dihydroguanosine 5'-triphosphate = cyclic pyranopterin phosphate + diphosphate. The protein operates within cofactor biosynthesis; molybdopterin biosynthesis. Functionally, catalyzes the conversion of (8S)-3',8-cyclo-7,8-dihydroguanosine 5'-triphosphate to cyclic pyranopterin monophosphate (cPMP). The protein is Cyclic pyranopterin monophosphate synthase of Nostoc sp. (strain PCC 7120 / SAG 25.82 / UTEX 2576).